The primary structure comprises 642 residues: MPVITLPDGSQRHYDHPVSPMDVALDIGPGLAKATIAGRVNGELVDASDLIENDATLSIITAKDEEGLEIIRHSCAHLLGHAIKQLWPHTKMAIGPVVDNGFYYDVDLDRTLTQEDVEALEKRMHELAEKNYDVIKKKVSWHEARETFVKRGESYKVSILDENIAHDDKPGLYHHEEYVDMCRGPHVPNMRFCHHFKLMKTAGAYWRGDSNNKMLQRIYGTAWADKKALNAYLQRLEEAAKRDHRKIGKQLDLYHMQEEAPGMVFWHNDGWTIFRELEVFVRSKLKEYQYQEVKGPFMMDRVLWEKTGHWDNYKDAMFTTSSENREYCIKPMNCPGHVQIFNQGLKSYRDLPLRMAEFGSCHRNEPSGALHGLMRVRGFTQDDAHIFCTEEQIRDEVNACIRMVYDMYSTFGFEKIVVKLSTRPDKRIGSDEMWDRAEADLAVALEENNIPFEYQLGEGAFYGPKIEFTLYDCLDRAWQCGTVQLDFSLPSRLSASYVGEDNERKVPVIIHRAILGSMERFIGILTEEFAGFFPTWLAPVQVVVMNITDSQSEYVNELTQKLQNAGIRVKADLRNEKIGFKIREHTLRRVPYMLVCGDKEVEAGKVAVRTRRGKDLGSLDVNDVIEKLQQEIRSRSLQQLEE.

Residues methionine 1–threonine 61 form the TGS domain. The tract at residues aspartate 243–proline 534 is catalytic. Zn(2+) contacts are provided by cysteine 334, histidine 385, and histidine 511.

Belongs to the class-II aminoacyl-tRNA synthetase family. Homodimer. Zn(2+) serves as cofactor.

It localises to the cytoplasm. It carries out the reaction tRNA(Thr) + L-threonine + ATP = L-threonyl-tRNA(Thr) + AMP + diphosphate + H(+). Its function is as follows. Catalyzes the attachment of threonine to tRNA(Thr) in a two-step reaction: L-threonine is first activated by ATP to form Thr-AMP and then transferred to the acceptor end of tRNA(Thr). Also edits incorrectly charged L-seryl-tRNA(Thr). The protein is Threonine--tRNA ligase of Salmonella paratyphi A (strain ATCC 9150 / SARB42).